The sequence spans 411 residues: DSEFAELKIRGKIFQLPILKASIGEDVIDISRVSAEVNCFTYDPGFMSTASCKSTITYIDGDKGILRHRGYNIKDLAEKSDFLEVAYLLIYGELPSIEQYNNFTKQVAHHSLVNERLHYLFQTFCSSSHPMAIMLAAIGSLSAFYPDLLNFKEADYELTAIRMIAKIPTIAAMSYKYSIGQPFVYPDNSLDFTENFLHMMFATPCTKYKVNPIIKNALNKIFILHADHEQNASTSTVRIAGSSGANAFACISTGIASLWGPAHGGANEAVINMLKEIGSSENIPKYIAKAKDKSDPFRLMGFGHRVYKNYDPRASVLKETCKEVLKELGQLENNPLLQIAIELEAIALKDEYFIERKLYPNVDFYSGIIYKAMGIPSQMFTVLFAIARTVGWMAQWKEMHEDPGQKISRPR.

Active-site residues include His304 and Asp363.

Belongs to the citrate synthase family.

It catalyses the reaction oxaloacetate + acetyl-CoA + H2O = citrate + CoA + H(+). The protein operates within carbohydrate metabolism; tricarboxylic acid cycle; isocitrate from oxaloacetate: step 1/2. This chain is Citrate synthase (gltA), found in Rickettsia akari.